The chain runs to 345 residues: Glycerol-3-phosphate dehydrogenase [NAD(P)+] (345 aa).

NADPH contacts are provided by S23, Y24, H44, and K118. The sn-glycerol 3-phosphate site is built by K118, G147, and T149. Residue A151 participates in NADPH binding. Residues K203, D256, S266, R267, and N268 each coordinate sn-glycerol 3-phosphate. K203 functions as the Proton acceptor in the catalytic mechanism. NADPH is bound at residue R267. Positions 291 and 293 each coordinate NADPH.

It belongs to the NAD-dependent glycerol-3-phosphate dehydrogenase family.

The protein localises to the cytoplasm. It carries out the reaction sn-glycerol 3-phosphate + NAD(+) = dihydroxyacetone phosphate + NADH + H(+). The enzyme catalyses sn-glycerol 3-phosphate + NADP(+) = dihydroxyacetone phosphate + NADPH + H(+). Its pathway is membrane lipid metabolism; glycerophospholipid metabolism. Catalyzes the reduction of the glycolytic intermediate dihydroxyacetone phosphate (DHAP) to sn-glycerol 3-phosphate (G3P), the key precursor for phospholipid synthesis. This Vibrio parahaemolyticus serotype O3:K6 (strain RIMD 2210633) protein is Glycerol-3-phosphate dehydrogenase [NAD(P)+].